Reading from the N-terminus, the 544-residue chain is Homeobox protein B-H1 (544 aa).

The segment covering 53-70 (STTTMSSGGSTTTASGIG) has biased composition (low complexity). Disordered stretches follow at residues 53–73 (STTT…GKPN), 92–179 (YKQQ…PPTA), 236–308 (GGVG…AFTD), and 471–544 (AANP…QIQV). The segment covering 95 to 105 (QQHHQQLHHHN) has biased composition (basic residues). The span at 106 to 131 (NNNNSGSSGGSSPAHSNNNNNINGDN) shows a compositional bias: low complexity. A compositionally biased stretch (basic residues) spans 156 to 172 (THPHTHPHALMHPHGKL). Over residues 247-262 (DLDDSSDYHEENEDCD) the composition is skewed to acidic residues. Positions 266-282 (MDDHSVCSNGGKDDDGN) are enriched in basic and acidic residues. A compositionally biased stretch (polar residues) spans 283 to 293 (SVKSGSTSDMS). The segment at residues 299–358 (QRKARTAFTDHQLQTLEKSFERQKYLSVQERQELAHKLDLSDCQVKTWYQNRRTKWKRQT) is a DNA-binding region (homeobox). Residues 476–485 (GPHPVAPPPS) are compositionally biased toward pro residues. The span at 492-506 (PSGLVKPIPAHSASA) shows a compositional bias: low complexity. Positions 507-516 (SPPPRPPSTP) are enriched in pro residues.

It belongs to the Antp homeobox family. In terms of tissue distribution, B-H1 and B-H2 are abundant in the eye-antenna imaginal disk. Expressed in R1 and R6 cells throughout larval stage until 30 hours after puparium formation, at which time expression is seen in the anterior and posterior primary pigment cells. Coexpressed in embryonic glial cells, neurons of the CNS and PNS, most latitudinal anterior cells of the developing notum and the central circular region of the leg and antennal imaginal disk throughout larval development.

The protein resides in the nucleus. Its function is as follows. B-H1 and B-H2 are regulated by members of the wg signaling pathway; wg and dpp. B-H1 and B-H2 are coexpressed and functionally required in R1 and R6 receptor cells and primary pigment cells for normal eye development. Coexpression is also required for the fate determination of external sensory organs, formation of notal microchaetae, formation of presutural macrochaetae, antennal development and for distal leg morphogenesis; segmentation and specification of tarsal segments 3-5. This is Homeobox protein B-H1 (B-H1) from Drosophila melanogaster (Fruit fly).